Here is a 1346-residue protein sequence, read N- to C-terminus: Cytokinesis protein sepH (1346 aa).

Residues 1-50 are disordered; the sequence is MVSRSNEGPEAPHPASRTPGAPAKGRLTRLGSSPSKRDDKAKDDRMGKTS. Basic and acidic residues predominate over residues 35 to 50; it reads SKRDDKAKDDRMGKTS. Positions 60 to 310 constitute a Protein kinase domain; it reads YQLGDCLGRG…ARKLLKHPWI (251 aa). ATP is bound by residues 66 to 74 and Lys-89; that span reads LGRGAFGSV. Asp-182 (proton acceptor) is an active-site residue. Disordered stretches follow at residues 342 to 380, 446 to 497, and 1211 to 1295; these read RSPESNALRRGTRNENQNPPSLRLDTRHTPTKVTLPSPV, DESF…HMRR, and LCKL…AGAS. Polar residues-rich tracts occupy residues 477 to 489 and 1220 to 1249; these read QQANSGTSQSQNG and RGSTSATSPGLLANQSAPVTPQLSRQNQSK.

This sequence belongs to the protein kinase superfamily. Ser/Thr protein kinase family. CDC7 subfamily. Mg(2+) serves as cofactor.

The enzyme catalyses L-seryl-[protein] + ATP = O-phospho-L-seryl-[protein] + ADP + H(+). It catalyses the reaction L-threonyl-[protein] + ATP = O-phospho-L-threonyl-[protein] + ADP + H(+). In terms of biological role, required for early events during cytokinesis including localization of cytoskeletal components to the cytokinetic ring. In Emericella nidulans (strain FGSC A4 / ATCC 38163 / CBS 112.46 / NRRL 194 / M139) (Aspergillus nidulans), this protein is Cytokinesis protein sepH.